A 258-amino-acid chain; its full sequence is Cobalt-precorrin-4 C(11)-methyltransferase (258 aa).

The protein belongs to the precorrin methyltransferase family. Homodimer.

The enzyme catalyses Co-precorrin-4 + S-adenosyl-L-methionine = Co-precorrin-5A + S-adenosyl-L-homocysteine + H(+). Its pathway is cofactor biosynthesis; adenosylcobalamin biosynthesis; cob(II)yrinate a,c-diamide from sirohydrochlorin (anaerobic route): step 4/10. Its function is as follows. Catalyzes the methylation of C-11 in cobalt-precorrin-4 to form cobalt-precorrin-5A. The polypeptide is Cobalt-precorrin-4 C(11)-methyltransferase (cbiF) (Priestia megaterium (Bacillus megaterium)).